Reading from the N-terminus, the 105-residue chain is Thioredoxin (105 aa).

The 105-residue stretch at 1–105 folds into the Thioredoxin domain; the sequence is VQVISSYDQF…LQAAITQHSA (105 aa). Residues Cys29 and Cys32 each act as nucleophile in the active site. Cys29 and Cys32 are oxidised to a cystine.

This sequence belongs to the thioredoxin family. In terms of assembly, monomer.

Functionally, participates in various redox reactions through the reversible oxidation of its active center dithiol to a disulfide and catalyzes dithiol-disulfide exchange reactions. The protein is Thioredoxin of Malassezia sympodialis (Atopic eczema-associated yeast).